The sequence spans 1989 residues: Exophilin-5 (1989 aa).

In terms of domain architecture, RabBD spans 7–63 (AFDFSFLNDEEARKILQVLERNEELQRAEKDRISKLQKTKRDIRWLQGVTGEWFEEI). Disordered regions lie at residues 93-117 (NDPI…PFSS) and 348-391 (TQSK…FLRA). Composition is skewed to polar residues over residues 100-111 (TSRSKNVTNQKK) and 359-376 (HQQS…WNRS). The segment covering 377–389 (DSSRDRENQEEFL) has biased composition (basic and acidic residues). Ser-603 carries the phosphoserine modification. Disordered stretches follow at residues 631-651 (FSQI…NPTV), 806-827 (STAS…RTDQ), and 882-933 (AALP…NQKN). The segment covering 641-651 (PQSPNLQNPTV) has biased composition (polar residues). Residues Ser-806 and Ser-809 each carry the phosphoserine modification. A compositionally biased stretch (polar residues) spans 891 to 909 (KNSSLDAPVVPSTTVFSRR). Residues 910 to 927 (SPSDKDPSLGEREEKDNA) are compositionally biased toward basic and acidic residues. Ser-1028 and Ser-1086 each carry phosphoserine. Disordered stretches follow at residues 1094-1113 (EATE…VRKG), 1124-1152 (SCPS…ASEL), and 1365-1493 (EIFS…TNCQ). A compositionally biased stretch (polar residues) spans 1098–1110 (RMTNVKSSGSTSV). Ser-1124 carries the phosphoserine modification. Residues 1379-1390 (SENKKERGKKLQ) are compositionally biased toward basic and acidic residues. A compositionally biased stretch (low complexity) spans 1416–1431 (SINSSNSGPSSLPALS). Over residues 1434-1447 (NIGNSQTRRSSWEC) the composition is skewed to polar residues. Position 1505 is a phosphoserine (Ser-1505). Disordered stretches follow at residues 1521–1590 (EETQ…NRSS) and 1644–1737 (PEPT…PITF). Basic and acidic residues-rich tracts occupy residues 1551–1560 (ESRKAEDEMQ), 1573–1589 (NKNK…ENRS), and 1658–1670 (RLSE…KKSE). The span at 1685–1709 (THVSNQKSNSISQRHQNEFKNVSES) shows a compositional bias: polar residues. Phosphoserine is present on residues Ser-1753, Ser-1768, Ser-1821, and Ser-1851. Residues 1921–1989 (FLKDDLRNPP…LDENDKESEL (69 aa)) form a disordered region. Low complexity predominate over residues 1933-1943 (SESLSSNSPSS). Positions 1959–1989 (YEDDPVDSDCDTDTTTDDEYYLDENDKESEL) are enriched in acidic residues.

In terms of assembly, interacts with RAB27A. As to expression, expressed in keratinocytes.

Its function is as follows. May act as Rab effector protein and play a role in vesicle trafficking. This is Exophilin-5 from Homo sapiens (Human).